The chain runs to 104 residues: UPF0235 protein MTH_637 (104 aa).

The protein belongs to the UPF0235 family.

This is UPF0235 protein MTH_637 from Methanothermobacter thermautotrophicus (strain ATCC 29096 / DSM 1053 / JCM 10044 / NBRC 100330 / Delta H) (Methanobacterium thermoautotrophicum).